The following is a 146-amino-acid chain: uncharacterized protein (146 aa).

A signal peptide spans 1–17 (MKRLLILTALLPFVGFA). 2 disordered regions span residues 27–54 (NQPGYQIPSQQRMQTQMQTQQIQQKGML) and 70–146 (ENQI…TIGP). Over residues 32-54 (QIPSQQRMQTQMQTQQIQQKGML) the composition is skewed to low complexity. Residues 77–118 (SQRVLQSQPGERNPARQQMLPNTNGGMLNSNRNPDSSLNQQH) show a composition bias toward polar residues.

This is an uncharacterized protein from Escherichia coli (strain K12).